A 205-amino-acid polypeptide reads, in one-letter code: Methylamine utilization protein MauD (205 aa).

Residues 5 to 25 form a helical membrane-spanning segment; the sequence is FLIASNVLLWLALIGCAVLML. The region spanning 50–184 is the Thioredoxin domain; sequence PDVGDAAPTF…LESLLEADKS (135 aa).

It localises to the membrane. It functions in the pathway one-carbon metabolism; methylamine degradation. May be specifically involved in the processing, transport, and/or maturation of the MADH beta-subunit. The protein is Methylamine utilization protein MauD (mauD) of Methylorubrum extorquens (strain ATCC 14718 / DSM 1338 / JCM 2805 / NCIMB 9133 / AM1) (Methylobacterium extorquens).